A 137-amino-acid polypeptide reads, in one-letter code: Diacylglycerol kinase (137 aa).

Glutamate 42 lines the a divalent metal cation pocket. Transmembrane regions (helical) follow at residues 49-67 (LIAF…ATFF) and 73-89 (AILF…NTAI). Glutamate 83 functions as the Proton acceptor in the catalytic mechanism. Glutamate 90 serves as a coordination point for a divalent metal cation. A helical membrane pass occupies residues 112–132 (SFACLCLIVANGVYAAYVVIF).

This sequence belongs to the bacterial diacylglycerol kinase family. It depends on Mg(2+) as a cofactor.

It localises to the cell inner membrane. The enzyme catalyses a 1,2-diacyl-sn-glycerol + ATP = a 1,2-diacyl-sn-glycero-3-phosphate + ADP + H(+). In terms of biological role, catalyzes the ATP-dependent phosphorylation of sn-l,2-diacylglycerol (DAG) to phosphatidic acid. Involved in the recycling of diacylglycerol produced as a by-product during membrane-derived oligosaccharide (MDO) biosynthesis. This chain is Diacylglycerol kinase (dgkA), found in Sinorhizobium sp.